The sequence spans 300 residues: Formate dehydrogenase-O iron-sulfur subunit (300 aa).

Topologically, residues 1–260 are cytoplasmic; sequence MAYQSQDIIR…KFWKGIWKPL (260 aa). 4Fe-4S ferredoxin-type domains are found at residues 30-60, 91-123, 124-153, and 158-189; these read VAKL…DTVG, LEWL…QYAN, GIVD…LNPE, and YKCT…FGTK. Positions 39, 42, 45, 49, 100, 103, 108, 112, 133, 136, 139, 143, 160, 163, 175, and 179 each coordinate [4Fe-4S] cluster. Residues 261–279 traverse the membrane as a helical segment; sequence AAVGFAATFAASIFHYVGV. Residues 280 to 300 lie on the Periplasmic side of the membrane; it reads GPNRADEEENNLHEEKDEERK.

As to quaternary structure, formate dehydrogenase is a membrane-bound complex, formed by subunits alpha, beta and gamma. Requires [4Fe-4S] cluster as cofactor.

It localises to the cell membrane. Its function is as follows. Allows to use formate as major electron donor during aerobic respiration. The beta chain is an electron transfer unit containing 4 cysteine clusters involved in the formation of iron-sulfur centers. Electrons are transferred from the gamma chain to the molybdenum cofactor of the alpha subunit. This is Formate dehydrogenase-O iron-sulfur subunit (fdoH) from Escherichia coli (strain K12).